We begin with the raw amino-acid sequence, 506 residues long: DNA polymerase type-X family protein pol4 (506 aa).

The BRCT domain occupies 1-98 (MKILASSTNY…TPGNPYVIWH (98 aa)). Residues 106–150 (GSPYTPSTRPASHTEAPNDFENHETPNTENNNEVKSIDNVDQEGS) are disordered. Positions 348–357 (RGKPVGADVD) are involved in ssDNA binding. D355, D357, and D419 together coordinate Mg(2+).

Belongs to the DNA polymerase type-X family. The cofactor is Mg(2+).

It localises to the cytoplasm. Its subcellular location is the nucleus. The enzyme catalyses DNA(n) + a 2'-deoxyribonucleoside 5'-triphosphate = DNA(n+1) + diphosphate. Its function is as follows. Repair polymerase. Involved in gap-filling in DNA non-homologous end joining (NHEJ) required for double-strand break repair. Can incorporate a ribonucleotide (rNTP) into a primer DNA. In Schizosaccharomyces pombe (strain 972 / ATCC 24843) (Fission yeast), this protein is DNA polymerase type-X family protein pol4 (pol4).